An 89-amino-acid chain; its full sequence is NADH-ubiquinone oxidoreductase chain 4L (89 aa).

The next 3 helical transmembrane spans lie at 1–21, 22–42, and 55–75; these read MNLS…NRKN, IILM…LILI, and FAIY…GILV.

Belongs to the complex I subunit 4L family.

The protein localises to the mitochondrion membrane. The enzyme catalyses a ubiquinone + NADH + 5 H(+)(in) = a ubiquinol + NAD(+) + 4 H(+)(out). Functionally, core subunit of the mitochondrial membrane respiratory chain NADH dehydrogenase (Complex I) that is believed to belong to the minimal assembly required for catalysis. Complex I functions in the transfer of electrons from NADH to the respiratory chain. The immediate electron acceptor for the enzyme is believed to be ubiquinone. This chain is NADH-ubiquinone oxidoreductase chain 4L (ND4L), found in Trichophyton rubrum (Athlete's foot fungus).